We begin with the raw amino-acid sequence, 186 residues long: Ribosome-recycling factor (186 aa).

It belongs to the RRF family.

The protein resides in the cytoplasm. Its function is as follows. Responsible for the release of ribosomes from messenger RNA at the termination of protein biosynthesis. May increase the efficiency of translation by recycling ribosomes from one round of translation to another. The chain is Ribosome-recycling factor from Rickettsia akari (strain Hartford).